We begin with the raw amino-acid sequence, 415 residues long: NADH-quinone oxidoreductase subunit D (415 aa).

Belongs to the complex I 49 kDa subunit family. In terms of assembly, NDH-1 is composed of 14 different subunits. Subunits NuoB, C, D, E, F, and G constitute the peripheral sector of the complex.

Its subcellular location is the cell inner membrane. It carries out the reaction a quinone + NADH + 5 H(+)(in) = a quinol + NAD(+) + 4 H(+)(out). Functionally, NDH-1 shuttles electrons from NADH, via FMN and iron-sulfur (Fe-S) centers, to quinones in the respiratory chain. The immediate electron acceptor for the enzyme in this species is believed to be ubiquinone. Couples the redox reaction to proton translocation (for every two electrons transferred, four hydrogen ions are translocated across the cytoplasmic membrane), and thus conserves the redox energy in a proton gradient. The chain is NADH-quinone oxidoreductase subunit D from Myxococcus xanthus (strain DK1622).